The primary structure comprises 1059 residues: DNA-directed RNA polymerase subunit beta (1059 aa).

Belongs to the RNA polymerase beta chain family. In plastids the minimal PEP RNA polymerase catalytic core is composed of four subunits: alpha, beta, beta', and beta''. When a (nuclear-encoded) sigma factor is associated with the core the holoenzyme is formed, which can initiate transcription (Potential).

It is found in the plastid. The protein localises to the apicoplast. The catalysed reaction is RNA(n) + a ribonucleoside 5'-triphosphate = RNA(n+1) + diphosphate. Functionally, DNA-dependent RNA polymerase catalyzes the transcription of DNA into RNA using the four ribonucleoside triphosphates as substrates. The sequence is that of DNA-directed RNA polymerase subunit beta (rpoB) from Eimeria tenella (Coccidian parasite).